We begin with the raw amino-acid sequence, 192 residues long: Transmembrane protein 276 (192 aa).

A signal peptide spans 1-32 (MVSKPRNEWSTALSHLVLAGVSLHAAVSSVQS). A run of 4 helical transmembrane segments spans residues 35-55 (GAAA…APEL), 63-83 (AGAW…FHWV), 92-112 (LLLG…PEGC), and 114-134 (VAGQ…AVFT).

Its subcellular location is the membrane. The protein is Transmembrane protein 276 of Rattus norvegicus (Rat).